A 989-amino-acid chain; its full sequence is Envelope glycoprotein gp160 (989 aa).

Positions 1–106 (MTSKESKPSR…CLMWEMRKGN (106 aa)) are cleaved as a signal peptide. The Extracellular segment spans residues 107–838 (QCQAEEVIAL…WSSWFSWLKY (732 aa)). 23 N-linked (GlcNAc...) asparagine; by host glycosylation sites follow: N140, N161, N206, N258, N298, N364, N381, N387, N403, N435, N439, N470, N475, N481, N491, N501, N515, N527, N537, N542, N543, N551, and N568. Positions 663-683 (GIGLVIVLAIMAIIAAAGAGL) are fusion peptide. The stretch at 695–745 (RTAVQSLANATAAQQEVLEASYAMVQHIAKGIRILEARVARVEALVDRMMV) forms a coiled coil. N-linked (GlcNAc...) asparagine; by host glycosylation is present at N703. Positions 729 to 745 (LEARVARVEALVDRMMV) are immunosuppression. 4 N-linked (GlcNAc...) asparagine; by host glycosylation sites follow: N771, N778, N794, and N828. Residues 786–821 (EEIEQHEGNLSLLLREAALQVHIAQRDARRIPDAWK) adopt a coiled-coil conformation. Residues 839–859 (IPWIIMGIVGLICFRILMCVI) form a helical membrane-spanning segment. Residues 860 to 989 (SMCLQAYKQV…PTLENDYVEL (130 aa)) are Cytoplasmic-facing. A lipid anchor (S-palmitoyl cysteine; by host) is attached at C862.

As to quaternary structure, the mature envelope protein (Env) consists of a trimer of SU-TM heterodimers attached by noncovalent interactions or by a labile interchain disulfide bond. Specific enzymatic cleavages in vivo yield mature proteins. Envelope glycoproteins are synthesized as an inactive precursor that is N-glycosylated and processed likely by host cell furin or by a furin-like protease in the Golgi to yield the mature SU and TM proteins. The cleavage site between SU and TM requires the minimal sequence [KR]-X-[KR]-R. Post-translationally, the transmembrane protein is palmitoylated.

It localises to the virion membrane. Its subcellular location is the host cell membrane. The surface protein (SU) attaches the virus to the host cell by binding to its receptor. This interaction triggers the refolding of the transmembrane protein (TM) and is thought to activate its fusogenic potential by unmasking its fusion peptide. Fusion occurs at the host cell plasma membrane. Its function is as follows. The transmembrane protein (TM) acts as a class I viral fusion protein. Under the current model, the protein has at least 3 conformational states: pre-fusion native state, pre-hairpin intermediate state, and post-fusion hairpin state. During viral and target cell membrane fusion, the coiled coil regions (heptad repeats) assume a trimer-of-hairpins structure, positioning the fusion peptide in close proximity to the C-terminal region of the ectodomain. The formation of this structure appears to drive apposition and subsequent fusion of viral and target cell membranes. Membranes fusion leads to delivery of the nucleocapsid into the cytoplasm. The sequence is that of Envelope glycoprotein gp160 (env) from Ovis aries (Sheep).